Here is a 140-residue protein sequence, read N- to C-terminus: Biopolymer transport protein exbD1 (140 aa).

At 1–16 (MAFSSGNSGGPMADIN) the chain is on the cytoplasmic side. A helical transmembrane segment spans residues 17–37 (VTPLVDVMLVLLIIFIITAPL). Residues 38 to 140 (MSHKVKVELP…GFVATKEKGQ (103 aa)) lie on the Periplasmic side of the membrane.

Belongs to the ExbD/TolR family. As to quaternary structure, the accessory proteins ExbB and ExbD seem to form a complex with TonB.

Its subcellular location is the cell inner membrane. In terms of biological role, involved in the TonB-dependent energy-dependent transport of various receptor-bound substrates. This Xanthomonas campestris pv. campestris (strain B100) protein is Biopolymer transport protein exbD1 (exbD1).